The following is a 210-amino-acid chain: Large ribosomal subunit protein uL3 (210 aa).

A disordered region spans residues 136–156 (THGTEKAHRSGGSIGNNTEPG).

The protein belongs to the universal ribosomal protein uL3 family. In terms of assembly, part of the 50S ribosomal subunit. Forms a cluster with proteins L14 and L19.

Its function is as follows. One of the primary rRNA binding proteins, it binds directly near the 3'-end of the 23S rRNA, where it nucleates assembly of the 50S subunit. In Solidesulfovibrio magneticus (strain ATCC 700980 / DSM 13731 / RS-1) (Desulfovibrio magneticus), this protein is Large ribosomal subunit protein uL3.